The chain runs to 156 residues: Small ribosomal subunit protein uS7 (156 aa).

This sequence belongs to the universal ribosomal protein uS7 family. In terms of assembly, part of the 30S ribosomal subunit. Contacts proteins S9 and S11.

In terms of biological role, one of the primary rRNA binding proteins, it binds directly to 16S rRNA where it nucleates assembly of the head domain of the 30S subunit. Is located at the subunit interface close to the decoding center, probably blocks exit of the E-site tRNA. This is Small ribosomal subunit protein uS7 from Trichormus variabilis (strain ATCC 29413 / PCC 7937) (Anabaena variabilis).